We begin with the raw amino-acid sequence, 99 residues long: Large ribosomal subunit protein eL21 (99 aa).

Belongs to the eukaryotic ribosomal protein eL21 family.

The sequence is that of Large ribosomal subunit protein eL21 from Pyrobaculum calidifontis (strain DSM 21063 / JCM 11548 / VA1).